A 736-amino-acid chain; its full sequence is Elongation factor 2 (736 aa).

Residues 18–234 (TRVRNIGIIA…VIDAYTASDK (217 aa)) enclose the tr-type G domain. Residues 27 to 34 (AHVDHGKT), 93 to 97 (DTPGH), and 147 to 150 (NKVD) contribute to the GTP site. His603 is modified (diphthamide).

The protein belongs to the TRAFAC class translation factor GTPase superfamily. Classic translation factor GTPase family. EF-G/EF-2 subfamily.

The protein localises to the cytoplasm. In terms of biological role, catalyzes the GTP-dependent ribosomal translocation step during translation elongation. During this step, the ribosome changes from the pre-translocational (PRE) to the post-translocational (POST) state as the newly formed A-site-bound peptidyl-tRNA and P-site-bound deacylated tRNA move to the P and E sites, respectively. Catalyzes the coordinated movement of the two tRNA molecules, the mRNA and conformational changes in the ribosome. The protein is Elongation factor 2 of Saccharolobus islandicus (strain Y.N.15.51 / Yellowstone #2) (Sulfolobus islandicus).